The primary structure comprises 640 residues: 1-deoxy-D-xylulose-5-phosphate synthase (640 aa).

Thiamine diphosphate contacts are provided by residues H79 and 120-122 (GHS). D151 serves as a coordination point for Mg(2+). Residues 152–153 (GG), N180, Y288, and E372 each bind thiamine diphosphate. N180 is a Mg(2+) binding site.

It belongs to the transketolase family. DXPS subfamily. Homodimer. The cofactor is Mg(2+). Thiamine diphosphate is required as a cofactor.

It catalyses the reaction D-glyceraldehyde 3-phosphate + pyruvate + H(+) = 1-deoxy-D-xylulose 5-phosphate + CO2. It participates in metabolic intermediate biosynthesis; 1-deoxy-D-xylulose 5-phosphate biosynthesis; 1-deoxy-D-xylulose 5-phosphate from D-glyceraldehyde 3-phosphate and pyruvate: step 1/1. In terms of biological role, catalyzes the acyloin condensation reaction between C atoms 2 and 3 of pyruvate and glyceraldehyde 3-phosphate to yield 1-deoxy-D-xylulose-5-phosphate (DXP). This is 1-deoxy-D-xylulose-5-phosphate synthase from Nitrosococcus oceani (strain ATCC 19707 / BCRC 17464 / JCM 30415 / NCIMB 11848 / C-107).